A 249-amino-acid polypeptide reads, in one-letter code: CDP-diacylglycerol pyrophosphatase (249 aa).

Residues Phe-7–Ala-27 form a helical membrane-spanning segment.

The protein belongs to the Cdh family.

It is found in the cell inner membrane. The catalysed reaction is a CDP-1,2-diacyl-sn-glycerol + H2O = a 1,2-diacyl-sn-glycero-3-phosphate + CMP + 2 H(+). Its pathway is phospholipid metabolism; CDP-diacylglycerol degradation; phosphatidate from CDP-diacylglycerol: step 1/1. The sequence is that of CDP-diacylglycerol pyrophosphatase from Citrobacter koseri (strain ATCC BAA-895 / CDC 4225-83 / SGSC4696).